Consider the following 280-residue polypeptide: Diaminopimelate epimerase (280 aa).

Asparagine 13 and asparagine 66 together coordinate substrate. Cysteine 75 acts as the Proton donor in catalysis. Substrate contacts are provided by residues 76 to 77, asparagine 165, asparagine 198, and 216 to 217; these read GN and ER. The active-site Proton acceptor is cysteine 225. Residue 226–227 participates in substrate binding; the sequence is GT.

Belongs to the diaminopimelate epimerase family. Homodimer.

The protein resides in the cytoplasm. It carries out the reaction (2S,6S)-2,6-diaminopimelate = meso-2,6-diaminopimelate. It functions in the pathway amino-acid biosynthesis; L-lysine biosynthesis via DAP pathway; DL-2,6-diaminopimelate from LL-2,6-diaminopimelate: step 1/1. In terms of biological role, catalyzes the stereoinversion of LL-2,6-diaminopimelate (L,L-DAP) to meso-diaminopimelate (meso-DAP), a precursor of L-lysine and an essential component of the bacterial peptidoglycan. The sequence is that of Diaminopimelate epimerase from Cyanothece sp. (strain PCC 7425 / ATCC 29141).